The chain runs to 290 residues: Phosphatidylglycerol--prolipoprotein diacylglyceryl transferase (290 aa).

The next 7 membrane-spanning stretches (helical) occupy residues 21-41 (VSLH…MWLA), 60-80 (LLYA…VLFY), 96-116 (WDGG…MFWF), 130-150 (FIAP…FING), 198-218 (SQLY…NLFI), 225-245 (GAVS…VEAF), and 258-278 (VISM…IMMI). Position 143 (Arg-143) interacts with a 1,2-diacyl-sn-glycero-3-phospho-(1'-sn-glycerol).

This sequence belongs to the Lgt family.

The protein localises to the cell inner membrane. It catalyses the reaction L-cysteinyl-[prolipoprotein] + a 1,2-diacyl-sn-glycero-3-phospho-(1'-sn-glycerol) = an S-1,2-diacyl-sn-glyceryl-L-cysteinyl-[prolipoprotein] + sn-glycerol 1-phosphate + H(+). Its pathway is protein modification; lipoprotein biosynthesis (diacylglyceryl transfer). In terms of biological role, catalyzes the transfer of the diacylglyceryl group from phosphatidylglycerol to the sulfhydryl group of the N-terminal cysteine of a prolipoprotein, the first step in the formation of mature lipoproteins. The protein is Phosphatidylglycerol--prolipoprotein diacylglyceryl transferase of Serratia proteamaculans (strain 568).